The sequence spans 447 residues: MNKNTWVIGFTLFAMFFGAGNLIFPPNLGLDSGQFFWPAILAFVLTGIGLPLLGVIVGALDKEGYIGALNKISPKFSILFLIIIYLTIGPLFAIPRTASTSFEMTITPIIHSNSSIALFIFTIIYFIVVLYICLNPSKLIDRIGSLLTPLLLITILAMIIKAYLDFSGNSAGKGNEALYHSNFSSFAEGFTQGYLTMDAIAAIAFSMIVVNAVKLTGITKTNQIFKQTLTAGLIAAIALIFIYISLGYIGNHMPVSDMKLNELKSHDRNIGTYLLTTMASTGFGSFGKYLLGIIVALACLTTACGLIVAVSEYFHRIVPKVSYKAFVLVFILMSFIIANQGLNAVISMSIPVLSIVYPVAITVVLLILIAKFIPTKRITQQIPVIIVFILSIFSVISKLGWLKINFIESLPLRAYSLEWFPVAIIATILGYLVGIFVKQDPIKYQQE.

The next 12 helical transmembrane spans lie at 6–26, 40–60, 74–94, 114–134, 143–163, 193–213, 229–249, 290–310, 326–346, 350–370, 382–402, and 417–437; these read WVIGFTLFAMFFGAGNLIFPP, ILAFVLTGIGLPLLGVIVGAL, PKFSILFLIIIYLTIGPLFAI, SSIALFIFTIIYFIVVLYICL, IGSLLTPLLLITILAMIIKAY, GYLTMDAIAAIAFSMIVVNAV, LTAGLIAAIALIFIYISLGYI, LLGIIVALACLTTACGLIVAV, FVLVFILMSFIIANQGLNAVI, IPVLSIVYPVAITVVLLILIA, IPVIIVFILSIFSVISKLGWL, and LEWFPVAIIATILGYLVGIFV.

It belongs to the branched chain amino acid transporter family.

Its subcellular location is the cell membrane. In terms of biological role, component of the transport system for branched-chain amino acids (leucine, isoleucine and valine), which is coupled to a proton motive force (Potential). Contributes to NaCl tolerance. The polypeptide is Putative branched-chain amino acid carrier protein SAR1419 (Staphylococcus aureus (strain MRSA252)).